The chain runs to 229 residues: Small ribosomal subunit protein mS23 (229 aa).

It belongs to the mitochondrion-specific ribosomal protein mS23 family. As to quaternary structure, component of the mitochondrial small ribosomal subunit.

It localises to the mitochondrion. In Yarrowia lipolytica (strain CLIB 122 / E 150) (Yeast), this protein is Small ribosomal subunit protein mS23 (RSM25).